Here is a 600-residue protein sequence, read N- to C-terminus: Melanophilin (600 aa).

Residues 4–124 (KLDLSKLTDE…IGSLEWYYEH (121 aa)) enclose the RabBD domain. Residues 64-107 (CARCLQPYQLLVNSKRQCLECGLFTCKSCGRVHPEEQGWICDPC) form an FYVE-type zinc finger. Disordered regions lie at residues 146-277 (QGGA…AELC), 390-465 (EELT…LSEL), 499-541 (TVKP…AKAM), and 553-600 (NSLK…AHQS). Composition is skewed to basic and acidic residues over residues 232–243 (CSEKAAPHKAEG) and 409–420 (KDEKAEPNRDKS). Residues 373-496 (GVRTEADVEE…ESRIAALRAA (124 aa)) are a coiled coil. Basic and acidic residues predominate over residues 558–569 (QGKDDDSFDRKS).

As to quaternary structure, binds RAB27A that has been activated by GTP-binding via its N-terminus. Binds MYO5A via its C-terminal coiled coil domain.

Its subcellular location is the cytoplasm. In terms of biological role, rab effector protein involved in melanosome transport. Serves as link between melanosome-bound RAB27A and the motor protein MYO5A. This chain is Melanophilin (MLPH), found in Homo sapiens (Human).